Consider the following 188-residue polypeptide: Ribose 1,5-bisphosphate phosphokinase PhnN (188 aa).

9–16 provides a ligand contact to ATP; that stretch reads GPSGAGKD.

The protein belongs to the ribose 1,5-bisphosphokinase family.

The catalysed reaction is alpha-D-ribose 1,5-bisphosphate + ATP = 5-phospho-alpha-D-ribose 1-diphosphate + ADP. It participates in metabolic intermediate biosynthesis; 5-phospho-alpha-D-ribose 1-diphosphate biosynthesis; 5-phospho-alpha-D-ribose 1-diphosphate from D-ribose 5-phosphate (route II): step 3/3. Catalyzes the phosphorylation of ribose 1,5-bisphosphate to 5-phospho-D-ribosyl alpha-1-diphosphate (PRPP). In Pectobacterium atrosepticum (strain SCRI 1043 / ATCC BAA-672) (Erwinia carotovora subsp. atroseptica), this protein is Ribose 1,5-bisphosphate phosphokinase PhnN.